Consider the following 283-residue polypeptide: 4-diphosphocytidyl-2-C-methyl-D-erythritol kinase (283 aa).

Residue lysine 10 is part of the active site. 99–109 (PMGGGLGGGSS) contributes to the ATP binding site. The active site involves aspartate 141.

It belongs to the GHMP kinase family. IspE subfamily. In terms of assembly, homodimer.

The enzyme catalyses 4-CDP-2-C-methyl-D-erythritol + ATP = 4-CDP-2-C-methyl-D-erythritol 2-phosphate + ADP + H(+). It participates in isoprenoid biosynthesis; isopentenyl diphosphate biosynthesis via DXP pathway; isopentenyl diphosphate from 1-deoxy-D-xylulose 5-phosphate: step 3/6. In terms of biological role, catalyzes the phosphorylation of the position 2 hydroxy group of 4-diphosphocytidyl-2C-methyl-D-erythritol. The protein is 4-diphosphocytidyl-2-C-methyl-D-erythritol kinase of Shigella boydii serotype 18 (strain CDC 3083-94 / BS512).